An 844-amino-acid polypeptide reads, in one-letter code: Meiosis-specific protein PAIR3 (844 aa).

4 disordered regions span residues 41-389, 418-506, 532-604, and 616-669; these read TSSV…RERR, KLSS…RFSD, DDLF…QISI, and WLSD…EPEK. Polar residues predominate over residues 106–120; that stretch reads QPDDNAIEQTGTFSF. 2 stretches are compositionally biased toward basic and acidic residues: residues 122–134 and 145–164; these read TRRE…DQLD and RQVE…RMKL. Composition is skewed to polar residues over residues 191–208 and 218–229; these read QPKS…QKVF and TPAQFNSQTANK. 2 stretches are compositionally biased toward basic and acidic residues: residues 256-270 and 324-363; these read RKKE…DKSG and AKVE…KGEK. Composition is skewed to polar residues over residues 364–382 and 420–440; these read TNSF…SCSR and SSPQ…SPQQ. Basic and acidic residues predominate over residues 441 to 456; it reads KENDNTHIPEASDRTA. The segment covering 459 to 473 has biased composition (low complexity); that stretch reads NSFNSTPSPAANPSP. Over residues 545-554 the composition is skewed to polar residues; the sequence is RSRSTSFTSD. A compositionally biased stretch (basic and acidic residues) spans 616–640; the sequence is WLSDVDSPDKSSIEHLGRKSHLKEG. Residues 646–661 show a composition bias toward polar residues; that stretch reads QLTSPTHFATSGTQET. Residues 731-765 are a coiled coil; sequence VNAGKSKRKRLESTFEEQQEKLRILHEKFKEEVNQ.

Expressed in pollen mother cells and the ovule tissues during meiosis.

The protein resides in the chromosome. It localises to the nucleus. Functionally, plays a crucial role in homologous chromosome pairing and synapsis in meiosis. Does not seem required for cytokinesis. Is essential for meiotic bouquet formation, homologous chromosome pairing and normal recombination, and synaptonemal complex (SC) assembly. Required for the proper association of PAIR2 with chromosomes. This Oryza sativa subsp. japonica (Rice) protein is Meiosis-specific protein PAIR3.